A 460-amino-acid chain; its full sequence is UDP-N-acetylmuramoylalanine--D-glutamate ligase (460 aa).

ATP is bound at residue 115–121 (GTNGKTT).

It belongs to the MurCDEF family.

It localises to the cytoplasm. The enzyme catalyses UDP-N-acetyl-alpha-D-muramoyl-L-alanine + D-glutamate + ATP = UDP-N-acetyl-alpha-D-muramoyl-L-alanyl-D-glutamate + ADP + phosphate + H(+). It participates in cell wall biogenesis; peptidoglycan biosynthesis. Functionally, cell wall formation. Catalyzes the addition of glutamate to the nucleotide precursor UDP-N-acetylmuramoyl-L-alanine (UMA). The polypeptide is UDP-N-acetylmuramoylalanine--D-glutamate ligase (Salinibacter ruber (strain DSM 13855 / M31)).